The sequence spans 432 residues: UPF0761 membrane protein Cag_0935 (432 aa).

The next 6 membrane-spanning stretches (helical) occupy residues 52–72, 108–128, 148–168, 190–210, 220–240, and 254–274; these read LLSIVPVLAVVLSVLNLFEVF, NIPLLGSLLLFVIALSLLSTV, FTLYWTVLTLGPLLIVSSLAA, LLALFPFINSIVAFFLLYMLV, AFAGALVASLLLELSKRWFLF, and ALSVVPMLFFWVYLAWVVVLV.

This sequence belongs to the UPF0761 family.

It is found in the cell inner membrane. This Chlorobium chlorochromatii (strain CaD3) protein is UPF0761 membrane protein Cag_0935.